We begin with the raw amino-acid sequence, 340 residues long: Methionyl-tRNA formyltransferase (340 aa).

110 to 113 (SLLP) contributes to the (6S)-5,6,7,8-tetrahydrofolate binding site.

Belongs to the Fmt family.

The enzyme catalyses L-methionyl-tRNA(fMet) + (6R)-10-formyltetrahydrofolate = N-formyl-L-methionyl-tRNA(fMet) + (6S)-5,6,7,8-tetrahydrofolate + H(+). Its function is as follows. Attaches a formyl group to the free amino group of methionyl-tRNA(fMet). The formyl group appears to play a dual role in the initiator identity of N-formylmethionyl-tRNA by promoting its recognition by IF2 and preventing the misappropriation of this tRNA by the elongation apparatus. The polypeptide is Methionyl-tRNA formyltransferase (Synechococcus sp. (strain WH7803)).